A 265-amino-acid chain; its full sequence is NAD-capped RNA hydrolase NudC (265 aa).

Arginine 76 contributes to the substrate binding site. Zn(2+)-binding residues include cysteine 106, cysteine 109, cysteine 124, and cysteine 127. Substrate is bound at residue tyrosine 132. Residues 133 to 256 (PRISPAMMVL…SIAHRLIRHA (124 aa)) enclose the Nudix hydrolase domain. Alanine 166, glutamate 182, and glutamate 186 together coordinate a divalent metal cation. Residues 167-188 (GFVEPGETLEECVHRETWEEVG) carry the Nudix box motif. 200-207 (QSWPFPHS) is a binding site for substrate. Glutamate 227 provides a ligand contact to a divalent metal cation. Substrate is bound at residue alanine 249.

It belongs to the Nudix hydrolase family. NudC subfamily. In terms of assembly, homodimer. Requires Mg(2+) as cofactor. The cofactor is Mn(2+). It depends on Zn(2+) as a cofactor.

The catalysed reaction is a 5'-end NAD(+)-phospho-ribonucleoside in mRNA + H2O = a 5'-end phospho-adenosine-phospho-ribonucleoside in mRNA + beta-nicotinamide D-ribonucleotide + 2 H(+). The enzyme catalyses NAD(+) + H2O = beta-nicotinamide D-ribonucleotide + AMP + 2 H(+). It carries out the reaction NADH + H2O = reduced beta-nicotinamide D-ribonucleotide + AMP + 2 H(+). Functionally, mRNA decapping enzyme that specifically removes the nicotinamide adenine dinucleotide (NAD) cap from a subset of mRNAs by hydrolyzing the diphosphate linkage to produce nicotinamide mononucleotide (NMN) and 5' monophosphate mRNA. The NAD-cap is present at the 5'-end of some mRNAs and stabilizes RNA against 5'-processing. Has preference for mRNAs with a 5'-end purine. Catalyzes the hydrolysis of a broad range of dinucleotide pyrophosphates. The protein is NAD-capped RNA hydrolase NudC of Chromobacterium violaceum (strain ATCC 12472 / DSM 30191 / JCM 1249 / CCUG 213 / NBRC 12614 / NCIMB 9131 / NCTC 9757 / MK).